The following is a 383-amino-acid chain: Acetylornithine deacetylase (383 aa).

H80 provides a ligand contact to Zn(2+). D82 is a catalytic residue. D112 contacts Zn(2+). Residue E144 is part of the active site. E145, E169, and H355 together coordinate Zn(2+).

This sequence belongs to the peptidase M20A family. ArgE subfamily. As to quaternary structure, homodimer. It depends on Zn(2+) as a cofactor. Requires Co(2+) as cofactor. Glutathione serves as cofactor.

It localises to the cytoplasm. The catalysed reaction is N(2)-acetyl-L-ornithine + H2O = L-ornithine + acetate. Its pathway is amino-acid biosynthesis; L-arginine biosynthesis; L-ornithine from N(2)-acetyl-L-ornithine (linear): step 1/1. Its function is as follows. Catalyzes the hydrolysis of the amide bond of N(2)-acetylated L-amino acids. Cleaves the acetyl group from N-acetyl-L-ornithine to form L-ornithine, an intermediate in L-arginine biosynthesis pathway, and a branchpoint in the synthesis of polyamines. The chain is Acetylornithine deacetylase from Escherichia coli O8 (strain IAI1).